A 627-amino-acid chain; its full sequence is Siderophore iron transporter ARN1 (627 aa).

Over 1–70 the chain is Extracellular; it reads MESVHSRDPV…TEIIGSAYNK (70 aa). Residues 71-91 traverse the membrane as a helical segment; the sequence is WYLQAILLLSAFICGYGYGLD. At 92-110 the chain is on the cytoplasmic side; it reads GNIRYIYTGYATSSYSEHS. Residues 111–131 form a helical membrane-spanning segment; it reads LLSTINVINAVVSAASQIIYA. The Extracellular segment spans residues 132–135; sequence RLSD. The chain crosses the membrane as a helical span at residues 136 to 156; the sequence is VFGRLYLFISAVILYVVGTII. Residues 157-167 are Cytoplasmic-facing; it reads QSQAYDVQRYA. A helical membrane pass occupies residues 168-188; the sequence is AGAIFYNAGYVGVILILLIIL. At 189 to 197 the chain is on the extracellular side; the sequence is SDFSSLKWR. Residues 198 to 218 form a helical membrane-spanning segment; sequence LLYQFVPTWPFIINTWIAGNI. Residues 219 to 231 lie on the Cytoplasmic side of the membrane; it reads TSRANPVVNWSWD. Residues 232–252 form a helical membrane-spanning segment; that stretch reads VGMWAFIFPLSCVPIVLCMLH. Over 253–290 the chain is Extracellular; sequence MQWRARKTPEWHALKGQKSYYQEHGFIKILKQLFWMLD. A helical membrane pass occupies residues 291-311; it reads VVGVLLMGCSLGCILVPLTLA. Residues 312 to 323 are Cytoplasmic-facing; sequence GGVKTTWNDSRL. Residues 324–344 form a helical membrane-spanning segment; it reads IGPFVLGFVLIPILWIWEYRF. Topologically, residues 345 to 367 are extracellular; sequence ARDPILPYRLVKDRAVWSSMGIS. A helical transmembrane segment spans residues 368–388; the sequence is FLIDFIYYMAADYLYTVMIVA. The Cytoplasmic portion of the chain corresponds to 389–398; sequence VNESVKSATR. The helical transmembrane segment at 399-419 threads the bilayer; it reads IATLSSFVSTVASPFFALLVT. At 420–424 the chain is on the extracellular side; that stretch reads RCTRL. Residues 425–445 traverse the membrane as a helical segment; that stretch reads KPFIMFGCALWMVAMGLLYHF. Over 446–454 the chain is Cytoplasmic; it reads RGGSQSHSG. A helical transmembrane segment spans residues 455-475; sequence IIGALCVWGVGTTLFTYPVTV. The Extracellular segment spans residues 476 to 563; that stretch reads SVQSAVSHEN…LMNAYKYVQR (88 aa). Residues 564-584 form a helical membrane-spanning segment; the sequence is LETIVALVFCVPLIAFSLCLR. Topologically, residues 585-627 are cytoplasmic; it reads DPKLTDTVAVEYIEDGEYVDTKDNDPILDWFEKLPSKFTFKRE.

Belongs to the major facilitator superfamily.

The protein localises to the cell membrane. It localises to the endosome membrane. Its function is as follows. Involved in the transport of siderophore ferrichrome and so has a role in iron homeostasis. The sequence is that of Siderophore iron transporter ARN1 (ARN1) from Saccharomyces cerevisiae (strain ATCC 204508 / S288c) (Baker's yeast).